The sequence spans 284 residues: uncharacterized protein (284 aa).

The signal sequence occupies residues 1–21 (MKTTMLMLVLLVCSYIHYVCA). 3 helical membrane passes run 88 to 108 (AGPF…FLWA), 144 to 164 (ALGV…LGVW), and 212 to 232 (VFTT…SPTY).

It localises to the membrane. This is an uncharacterized protein from Schizosaccharomyces pombe (strain 972 / ATCC 24843) (Fission yeast).